Here is a 668-residue protein sequence, read N- to C-terminus: Phosphatidylinositol 4-phosphate 5-kinase type-1 gamma (668 aa).

Positions 45–67 (SMTAQPGPGHGKKLGHRGVDASG) are disordered. In terms of domain architecture, PIPK spans 75 to 443 (TSSTLKGAIQ…RFFKFMSNTV (369 aa)). An N6-acetyllysine mark is found at Lys265 and Lys268. Arg459 carries the asymmetric dimethylarginine; alternate modification. At Arg459 the chain carries Omega-N-methylarginine; alternate. Residues 526–535 (TTLSSTSLSI) show a composition bias toward low complexity. Disordered stretches follow at residues 526–578 (TTLS…ITVQ) and 593–642 (EDAG…YFPT). The residue at position 555 (Ser555) is a Phosphoserine. Residue Tyr639 is modified to Phosphotyrosine; by EGFR. Positions 641 to 668 (PTDERSWVYSPLHYSAQAPPASDGESDT) are mediates interaction with TLN2. Tyr649 bears the Phosphotyrosine; by CSK mark. Ser650 carries the phosphoserine; by CDK5, MAPK1 and CDK1 modification. 2 positions are modified to phosphoserine: Ser662 and Ser666. A Phosphothreonine modification is found at Thr668.

As to quaternary structure, interacts with TLN1. Interacts with TLN2; interaction stimulates 1-phosphatidylinositol-4-phosphate 5-kinase activity. May compete with beta-integrins for the same binding site on TLN1 and TLN2. Interacts with ARF6; interaction stimulates 1-phosphatidylinositol-4-phosphate 5-kinase activity. Interacts with AP2B1. Interacts with AP2M1; phosphorylation of PIP5K1C by CSK disrupts the interaction; clathrin competes with PIP5K1C. Interacts with CDH1. Interacts with CSK. Interacts with PLCG1; interaction is abolished upon EGF stimulation. Interacts with LAPTM4B; promotes SNX5 association with LAPTM4B; kinase activity of PIP5K1C is required; interaction is regulated by phosphatidylinositol 4,5-bisphosphate generated by PIP5K1C. Phosphorylation on Ser-650 negatively regulates binding to TLN2 and is strongly stimulated in mitosis. Phosphorylation on Tyr-649 is necessary for targeting to focal adhesions. Phosphorylation on Ser-650 and Tyr-649 are mutually exclusive. Phosphorylated by SYK and CSK. Tyrosine phosphorylation is enhanced by PTK2 signaling. Phosphorylated at Tyr-639 upon EGF stimulation. Some studies suggest that phosphorylation on Tyr-649 enhances binding to tailins (TLN1 and TLN2). According to PubMed:15738269 phosphorylation at Tyr-649 does not directly enhance binding to tailins (TLN1 and TLN2) but may act indirectly by inhibiting phosphorylation at Ser-650. In terms of processing, acetylation at Lys-265 and Lys-268 seems to decrease lipid 1-phosphatidylinositol-4-phosphate 5-kinase activity. Deacetylation of these sites by SIRT1 positively regulates the exocytosis of TSH-containing granules from pituitary cells. In terms of tissue distribution, isoform 1 is strongly expressed in brain and also detected in heart and lung. Isoform 2 is strongly expressed in pancreas and liver and in lesser quantities in brain, heart, lung and kidney. As to expression, isoform 3 is detected in large amounts in heart and large intestine, is also present in lung, pancreas and thyroid, and to a lesser extent in brain, stomach and kidney.

The protein localises to the cell membrane. The protein resides in the endomembrane system. Its subcellular location is the cytoplasm. It localises to the cell junction. It is found in the focal adhesion. The protein localises to the adherens junction. The protein resides in the cell projection. Its subcellular location is the ruffle membrane. It localises to the phagocytic cup. It is found in the uropodium. The protein localises to the nucleus. It carries out the reaction a 1,2-diacyl-sn-glycero-3-phospho-(1D-myo-inositol 4-phosphate) + ATP = a 1,2-diacyl-sn-glycero-3-phospho-(1D-myo-inositol-4,5-bisphosphate) + ADP + H(+). It catalyses the reaction 1-octadecanoyl-2-(5Z,8Z,11Z,14Z)-eicosatetraenoyl-sn-glycero-3-phospho-1D-myo-inositol 4-phosphate + ATP = 1-octadecanoyl-2-(5Z,8Z,11Z,14Z)-eicosatetraenoyl-sn-glycero-3-phospho-1D-myo-inositol 4,5-bisphosphate + ADP + H(+). The enzyme catalyses 1-octadecanoyl-2-(9Z)-octadecenoyl-sn-glycero-3-phospho-1D-myo-inositol 4-phosphate + ATP = 1-octadecanoyl-2-(9Z)-octadecenoyl-sn-glycero-3-phospho-1D-myo-inositol 4,5-bisphosphate + ADP + H(+). The catalysed reaction is 1-octadecanoyl-2-(9Z)-octadecenoyl-sn-glycero-3-phospho-1D-myo-inositol + ATP = 1-octadecanoyl-2-(9Z)-octadecenoyl-sn-glycero-3-phospho-1D-myo-inositol 5-phosphate + ADP + H(+). It carries out the reaction 1-octadecanoyl-2-(9Z,12Z)-octadecadienoyl-sn-glycero-3-phospho-1D-myo-inositol + ATP = 1-octadecanoyl-2-(9Z,12Z)-octadecadienoyl-sn-glycero-3-phospho-1D-myo-inositol 5-phosphate + ADP + H(+). It catalyses the reaction 1-octadecanoyl-2-(5Z,8Z,11Z,14Z-eicosatetraenoyl)-sn-glycero-3-phospho-(1D-myo-inositol) + ATP = 1-octadecanoyl-2-(5Z,8Z,11Z,14Z)-eicosatetraenoyl-sn-glycero-3-phospho-1D-myo-inositol 5-phosphate + ADP + H(+). The enzyme catalyses 1,2-di-(9Z,12Z)-octadecadienoyl-sn-glycero-3-phospho-1D-myo-inositol + ATP = 1,2-di(9Z,12Z)-octadecadienoyl-sn-glycero-3-phospho-1D-myo-inositol 5-phosphate + ADP + H(+). Functionally, catalyzes the phosphorylation of phosphatidylinositol 4-phosphate (PtdIns(4)P/PI4P) to form phosphatidylinositol 4,5-bisphosphate (PtdIns(4,5)P2/PIP2), a lipid second messenger that regulates several cellular processes such as signal transduction, vesicle trafficking, actin cytoskeleton dynamics, cell adhesion, and cell motility. PtdIns(4,5)P2 can directly act as a second messenger or can be utilized as a precursor to generate other second messengers: inositol 1,4,5-trisphosphate (IP3), diacylglycerol (DAG) or phosphatidylinositol-3,4,5-trisphosphate (PtdIns(3,4,5)P3/PIP3). PIP5K1A-mediated phosphorylation of PtdIns(4)P is the predominant pathway for PtdIns(4,5)P2 synthesis. Together with PIP5K1A, is required for phagocytosis, both enzymes regulating different types of actin remodeling at sequential steps. Promotes particle attachment by generating the pool of PtdIns(4,5)P2 that induces controlled actin depolymerization to facilitate Fc-gamma-R clustering. Mediates RAC1-dependent reorganization of actin filaments. Required for synaptic vesicle transport. Controls the plasma membrane pool of PtdIns(4,5)P2 implicated in synaptic vesicle endocytosis and exocytosis. Plays a role in endocytosis mediated by clathrin and AP-2 (adaptor protein complex 2). Required for clathrin-coated pits assembly at the synapse. Participates in cell junction assembly. Modulates adherens junctions formation by facilitating CDH1/cadherin trafficking. Required for focal adhesion dynamics. Modulates the targeting of talins (TLN1 and TLN2) to the plasma membrane and their efficient assembly into focal adhesions. Regulates the interaction between talins (TLN1 and TLN2) and beta-integrins. Required for uropodium formation and retraction of the cell rear during directed migration. Has a role in growth factor-stimulated directional cell migration and adhesion. Required for talin assembly into nascent adhesions forming at the leading edge toward the direction of the growth factor. Negative regulator of T-cell activation and adhesion. Negatively regulates integrin alpha-L/beta-2 (LFA-1) polarization and adhesion induced by T-cell receptor. Together with PIP5K1A has a role during embryogenesis and together with PIP5K1B may have a role immediately after birth. The polypeptide is Phosphatidylinositol 4-phosphate 5-kinase type-1 gamma (Homo sapiens (Human)).